Reading from the N-terminus, the 972-residue chain is UPF0746 protein DDB_G0280785 (972 aa).

Over residues 1 to 19 the composition is skewed to basic and acidic residues; it reads MISNKRKEIENINRHHEKD. Positions 1–30 are disordered; it reads MISNKRKEIENINRHHEKDNDDDDSDGIDN. Residues 44–78 form the SAP domain; it reads SGSTNYRELQIIAKSLGLASNGKKQLVYNRIEGYF.

This sequence belongs to the UPF0746 family.

This is UPF0746 protein DDB_G0280785 from Dictyostelium discoideum (Social amoeba).